The primary structure comprises 192 residues: E3 ubiquitin-protein ligase RNF185 (192 aa).

Residues 1-14 (MASKGPSASASTEN) are compositionally biased toward polar residues. Residues 1–30 (MASKGPSASASTENSSAGGPSGSSNGTGES) form a disordered region. Over 1–130 (MASKGPSASA…GGFQGFGFGD (130 aa)) the chain is Cytoplasmic. Residues 15-27 (SSAGGPSGSSNGT) are compositionally biased toward low complexity. The interval 29–80 (ESGGQDSTFECNICLDTAKDAVISLCGHLFCWPCLHQWLETRPNRQVCPVCK) is required for ubiquitin ligase activity and protection against ER stress-induced cell death. The RING-type zinc-finger motif lies at 39-80 (CNICLDTAKDAVISLCGHLFCWPCLHQWLETRPNRQVCPVCK). The interval 90 to 123 (PLYGRGSTGQQDPREKTPPRPQGQRPEPENRGGF) is disordered. Residues 131-151 (GGFQMSFGIGAFPFGIFATAF) traverse the membrane as a helical segment. Topologically, residues 152–171 (NINDGRPPPAVPGTPQYVDE) are mitochondrial intermembrane. A helical membrane pass occupies residues 172–192 (QFLSRLFLFVALVIMFWLLIA).

In terms of assembly, interacts with ATG5 and BNIP1.

The protein localises to the mitochondrion outer membrane. The protein resides in the endoplasmic reticulum membrane. It catalyses the reaction S-ubiquitinyl-[E2 ubiquitin-conjugating enzyme]-L-cysteine + [acceptor protein]-L-lysine = [E2 ubiquitin-conjugating enzyme]-L-cysteine + N(6)-ubiquitinyl-[acceptor protein]-L-lysine.. It participates in protein modification; protein ubiquitination. In terms of biological role, E3 ubiquitin-protein ligase that regulates selective mitochondrial autophagy by mediating 'Lys-63'-linked polyubiquitination of BNIP1. Acts in the endoplasmic reticulum (ER)-associated degradation (ERAD) pathway, which targets misfolded proteins that accumulate in the endoplasmic reticulum (ER) for ubiquitination and subsequent proteasome-mediated degradation. Protects cells from ER stress-induced apoptosis. Responsible for the cotranslational ubiquitination and degradation of CFTR in the ERAD pathway. Also acts as a regulator of the innate antiviral response by catalyzing 'Lys-27'-linked polyubiquitination of CGAS, thereby promoting CGAS cyclic GMP-AMP synthase activity. Preferentially associates with the E2 enzymes UBE2J1 and UBE2J2. The protein is E3 ubiquitin-protein ligase RNF185 (Rnf185) of Rattus norvegicus (Rat).